Consider the following 336-residue polypeptide: Aspartate--ammonia ligase (336 aa).

It belongs to the class-II aminoacyl-tRNA synthetase family. AsnA subfamily.

The protein localises to the cytoplasm. It catalyses the reaction L-aspartate + NH4(+) + ATP = L-asparagine + AMP + diphosphate + H(+). It participates in amino-acid biosynthesis; L-asparagine biosynthesis; L-asparagine from L-aspartate (ammonia route): step 1/1. This is Aspartate--ammonia ligase from Limosilactobacillus reuteri (strain DSM 20016) (Lactobacillus reuteri).